The sequence spans 452 residues: tRNA pseudouridine synthase Pus10 (452 aa).

Positions 71–200 (EMLRALAPSC…DGHVEIQIQP (130 aa)) constitute a THUMP domain. Asp269 (nucleophile) is an active-site residue. 2 residues coordinate substrate: Tyr335 and Tyr406.

Belongs to the pseudouridine synthase Pus10 family.

It carries out the reaction uridine(54) in tRNA = pseudouridine(54) in tRNA. It catalyses the reaction uridine(55) in tRNA = pseudouridine(55) in tRNA. Its function is as follows. Responsible for synthesis of pseudouridine from uracil-54 and uracil-55 in the psi GC loop of transfer RNAs. This is tRNA pseudouridine synthase Pus10 from Methanothrix thermoacetophila (strain DSM 6194 / JCM 14653 / NBRC 101360 / PT) (Methanosaeta thermophila).